A 194-amino-acid chain; its full sequence is Recombination protein RecR (194 aa).

The segment at 52 to 67 (CTECRTFTEEEVCHIC) adopts a C4-type zinc-finger fold. Positions 76–171 (GQICVVESPA…EASRIAHGVP (96 aa)) constitute a Toprim domain.

This sequence belongs to the RecR family.

In terms of biological role, may play a role in DNA repair. It seems to be involved in an RecBC-independent recombinational process of DNA repair. It may act with RecF and RecO. The protein is Recombination protein RecR of Vibrio campbellii (strain ATCC BAA-1116).